Consider the following 289-residue polypeptide: Tachykinins (289 aa).

The signal sequence occupies residues M1–A24. Residues A25–V49 constitute a propeptide that is removed on maturation. The interval E28 to P80 is disordered. R61 carries the post-translational modification Arginine amide. Residues G62 to A72 show a composition bias toward basic and acidic residues. N95 carries the post-translational modification Asparagine amide. At R110 the chain carries Arginine amide. Position 155 is a valine amide (V155). The interval G156 to D175 is disordered. 4 positions are modified to arginine amide: R167, R198, R237, and R281. The propeptide occupies P285–E289.

Belongs to the tachykinin family.

The protein localises to the secreted. Functionally, tachykinins are active peptides which excite neurons, evoke behavioral responses, are potent vasodilators and secretagogues, and contract (directly or indirectly) many smooth muscles. Stimulates gut muscle contractions. In Drosophila pseudoobscura pseudoobscura (Fruit fly), this protein is Tachykinins.